Here is a 93-residue protein sequence, read N- to C-terminus: Translation initiation factor IF-1 (93 aa).

In terms of domain architecture, S1-like spans 1–72 (MAKEELIQFE…EKGRLIFRHK (72 aa)). Positions 70–93 (RHKDERPGGPPRSGPPRGGQFRRR) are disordered.

It belongs to the IF-1 family. Component of the 30S ribosomal translation pre-initiation complex which assembles on the 30S ribosome in the order IF-2 and IF-3, IF-1 and N-formylmethionyl-tRNA(fMet); mRNA recruitment can occur at any time during PIC assembly.

Its subcellular location is the cytoplasm. One of the essential components for the initiation of protein synthesis. Stabilizes the binding of IF-2 and IF-3 on the 30S subunit to which N-formylmethionyl-tRNA(fMet) subsequently binds. Helps modulate mRNA selection, yielding the 30S pre-initiation complex (PIC). Upon addition of the 50S ribosomal subunit IF-1, IF-2 and IF-3 are released leaving the mature 70S translation initiation complex. The chain is Translation initiation factor IF-1 from Nitrobacter winogradskyi (strain ATCC 25391 / DSM 10237 / CIP 104748 / NCIMB 11846 / Nb-255).